We begin with the raw amino-acid sequence, 350 residues long: RNA 3'-terminal phosphate cyclase (350 aa).

Residues glutamine 100 and 290–294 (FLGDQ) contribute to the ATP site. Histidine 314 acts as the Tele-AMP-histidine intermediate in catalysis.

Belongs to the RNA 3'-terminal cyclase family. Type 1 subfamily.

It is found in the cytoplasm. It carries out the reaction a 3'-end 3'-phospho-ribonucleotide-RNA + ATP = a 3'-end 2',3'-cyclophospho-ribonucleotide-RNA + AMP + diphosphate. In terms of biological role, catalyzes the conversion of 3'-phosphate to a 2',3'-cyclic phosphodiester at the end of RNA. The mechanism of action of the enzyme occurs in 3 steps: (A) adenylation of the enzyme by ATP; (B) transfer of adenylate to an RNA-N3'P to produce RNA-N3'PP5'A; (C) and attack of the adjacent 2'-hydroxyl on the 3'-phosphorus in the diester linkage to produce the cyclic end product. The biological role of this enzyme is unknown but it is likely to function in some aspects of cellular RNA processing. The sequence is that of RNA 3'-terminal phosphate cyclase from Thermococcus sibiricus (strain DSM 12597 / MM 739).